The sequence spans 224 residues: Adenylate kinase (224 aa).

10–15 provides a ligand contact to ATP; sequence GSGKST. Residues 30 to 59 form an NMP region; it reads SSGDLIRREIERKSSLGREMEAYLSRGDLI. AMP-binding positions include S31, R36, 57-59, 83-86, and Q90; these read DLI and GYPR. The LID stretch occupies residues 124–161; the sequence is GRRICPNCGAVYHVKYNPPKVPGICDVCGSELIQRADD. Position 125 (R125) interacts with ATP. C128 and C131 together coordinate Zn(2+). 134–135 lines the ATP pocket; sequence VY. C148 and C151 together coordinate Zn(2+). Residues R158 and R169 each coordinate AMP. Residue G197 participates in ATP binding.

Belongs to the adenylate kinase family. Monomer.

The protein resides in the cytoplasm. It catalyses the reaction AMP + ATP = 2 ADP. It functions in the pathway purine metabolism; AMP biosynthesis via salvage pathway; AMP from ADP: step 1/1. Functionally, catalyzes the reversible transfer of the terminal phosphate group between ATP and AMP. Plays an important role in cellular energy homeostasis and in adenine nucleotide metabolism. This is Adenylate kinase from Thermococcus kodakarensis (strain ATCC BAA-918 / JCM 12380 / KOD1) (Pyrococcus kodakaraensis (strain KOD1)).